The sequence spans 123 residues: Large ribosomal subunit protein uL22c (123 aa).

This sequence belongs to the universal ribosomal protein uL22 family. As to quaternary structure, part of the 50S ribosomal subunit.

The protein localises to the plastid. It is found in the chloroplast. Functionally, this protein binds specifically to 23S rRNA. In terms of biological role, the globular domain of the protein is located near the polypeptide exit tunnel on the outside of the subunit, while an extended beta-hairpin is found that lines the wall of the exit tunnel in the center of the 70S ribosome. This is Large ribosomal subunit protein uL22c (rpl22) from Chara vulgaris (Common stonewort).